Consider the following 189-residue polypeptide: Elongation factor P (189 aa).

At K34 the chain carries N6-(3,6-diaminohexanoyl)-5-hydroxylysine.

The protein belongs to the elongation factor P family. In terms of processing, may be beta-lysylated on the epsilon-amino group of Lys-34 by the combined action of EpmA and EpmB, and then hydroxylated on the C5 position of the same residue by EpmC (if this protein is present). Lysylation is critical for the stimulatory effect of EF-P on peptide-bond formation. The lysylation moiety may extend toward the peptidyltransferase center and stabilize the terminal 3-CCA end of the tRNA. Hydroxylation of the C5 position on Lys-34 may allow additional potential stabilizing hydrogen-bond interactions with the P-tRNA.

The protein resides in the cytoplasm. It functions in the pathway protein biosynthesis; polypeptide chain elongation. Its function is as follows. Involved in peptide bond synthesis. Alleviates ribosome stalling that occurs when 3 or more consecutive Pro residues or the sequence PPG is present in a protein, possibly by augmenting the peptidyl transferase activity of the ribosome. Modification of Lys-34 is required for alleviation. The sequence is that of Elongation factor P from Teredinibacter turnerae (strain ATCC 39867 / T7901).